Reading from the N-terminus, the 430-residue chain is Serine--tRNA ligase (430 aa).

237 to 239 (TAE) provides a ligand contact to L-serine. ATP is bound at residue 268 to 270 (RSE). Glutamate 291 contributes to the L-serine binding site. An ATP-binding site is contributed by 355–358 (EISS). An L-serine-binding site is contributed by serine 391.

The protein belongs to the class-II aminoacyl-tRNA synthetase family. Type-1 seryl-tRNA synthetase subfamily. In terms of assembly, homodimer. The tRNA molecule binds across the dimer.

It is found in the cytoplasm. It catalyses the reaction tRNA(Ser) + L-serine + ATP = L-seryl-tRNA(Ser) + AMP + diphosphate + H(+). The catalysed reaction is tRNA(Sec) + L-serine + ATP = L-seryl-tRNA(Sec) + AMP + diphosphate + H(+). It functions in the pathway aminoacyl-tRNA biosynthesis; selenocysteinyl-tRNA(Sec) biosynthesis; L-seryl-tRNA(Sec) from L-serine and tRNA(Sec): step 1/1. Its function is as follows. Catalyzes the attachment of serine to tRNA(Ser). Is also able to aminoacylate tRNA(Sec) with serine, to form the misacylated tRNA L-seryl-tRNA(Sec), which will be further converted into selenocysteinyl-tRNA(Sec). This Salmonella schwarzengrund (strain CVM19633) protein is Serine--tRNA ligase.